A 164-amino-acid chain; its full sequence is Anterior gradient protein 3 (164 aa).

An N-terminal signal peptide occupies residues Met1–Ala19. Residues Gln161 to Leu164 carry the Prevents secretion from ER motif.

Belongs to the AGR family.

The protein resides in the endoplasmic reticulum. The protein localises to the cytoplasm. Required for calcium-mediated regulation of ciliary beat frequency in the airway. The polypeptide is Anterior gradient protein 3 (Xenopus tropicalis (Western clawed frog)).